Consider the following 205-residue polypeptide: Ribonuclease HII (205 aa).

The RNase H type-2 domain occupies 15–205 (SRVCGIDEAG…SFKLRKLGEK (191 aa)). A divalent metal cation-binding residues include Asp-21, Glu-22, and Asp-117.

The protein belongs to the RNase HII family. Mn(2+) is required as a cofactor. The cofactor is Mg(2+).

The protein resides in the cytoplasm. It catalyses the reaction Endonucleolytic cleavage to 5'-phosphomonoester.. In terms of biological role, endonuclease that specifically degrades the RNA of RNA-DNA hybrids. The polypeptide is Ribonuclease HII (Chlorobaculum parvum (strain DSM 263 / NCIMB 8327) (Chlorobium vibrioforme subsp. thiosulfatophilum)).